The primary structure comprises 137 residues: Small ribosomal subunit protein uS12 (137 aa).

2 disordered regions span residues 1–21 (MPTI…KSDS) and 34–57 (VHTK…TPKK). Aspartate 102 carries the 3-methylthioaspartic acid modification.

Belongs to the universal ribosomal protein uS12 family. As to quaternary structure, part of the 30S ribosomal subunit. Contacts proteins S8 and S17. May interact with IF1 in the 30S initiation complex.

With S4 and S5 plays an important role in translational accuracy. In terms of biological role, interacts with and stabilizes bases of the 16S rRNA that are involved in tRNA selection in the A site and with the mRNA backbone. Located at the interface of the 30S and 50S subunits, it traverses the body of the 30S subunit contacting proteins on the other side and probably holding the rRNA structure together. The combined cluster of proteins S8, S12 and S17 appears to hold together the shoulder and platform of the 30S subunit. The chain is Small ribosomal subunit protein uS12 from Streptococcus equi subsp. zooepidemicus (strain H70).